Reading from the N-terminus, the 244-residue chain is 1-(5-phosphoribosyl)-5-[(5-phosphoribosylamino)methylideneamino] imidazole-4-carboxamide isomerase (244 aa).

D10 serves as the catalytic Proton acceptor. D132 serves as the catalytic Proton donor.

The protein belongs to the HisA/HisF family.

It is found in the cytoplasm. It catalyses the reaction 1-(5-phospho-beta-D-ribosyl)-5-[(5-phospho-beta-D-ribosylamino)methylideneamino]imidazole-4-carboxamide = 5-[(5-phospho-1-deoxy-D-ribulos-1-ylimino)methylamino]-1-(5-phospho-beta-D-ribosyl)imidazole-4-carboxamide. Its pathway is amino-acid biosynthesis; L-histidine biosynthesis; L-histidine from 5-phospho-alpha-D-ribose 1-diphosphate: step 4/9. This is 1-(5-phosphoribosyl)-5-[(5-phosphoribosylamino)methylideneamino] imidazole-4-carboxamide isomerase from Xanthomonas euvesicatoria pv. vesicatoria (strain 85-10) (Xanthomonas campestris pv. vesicatoria).